The chain runs to 43 residues: Large ribosomal subunit protein uL5 (43 aa).

The protein belongs to the universal ribosomal protein uL5 family. As to quaternary structure, part of the 50S ribosomal subunit; part of the 5S rRNA/L5/L18/L25 subcomplex. Contacts the 5S rRNA and the P site tRNA. Forms a bridge to the 30S subunit in the 70S ribosome.

Its function is as follows. This is one of the proteins that bind and probably mediate the attachment of the 5S RNA into the large ribosomal subunit, where it forms part of the central protuberance. In the 70S ribosome it contacts protein S13 of the 30S subunit (bridge B1b), connecting the 2 subunits; this bridge is implicated in subunit movement. Contacts the P site tRNA; the 5S rRNA and some of its associated proteins might help stabilize positioning of ribosome-bound tRNAs. The chain is Large ribosomal subunit protein uL5 (rplE) from Proteus vulgaris.